A 178-amino-acid chain; its full sequence is Large ribosomal subunit protein uL6 (178 aa).

The protein belongs to the universal ribosomal protein uL6 family. Part of the 50S ribosomal subunit.

Functionally, this protein binds to the 23S rRNA, and is important in its secondary structure. It is located near the subunit interface in the base of the L7/L12 stalk, and near the tRNA binding site of the peptidyltransferase center. This chain is Large ribosomal subunit protein uL6, found in Helicobacter pylori (strain G27).